Consider the following 200-residue polypeptide: GTP cyclohydrolase-2 (200 aa).

Residue 49-53 coordinates GTP; it reads RVHSE. Zn(2+) is bound by residues cysteine 54, cysteine 65, and cysteine 67. GTP contacts are provided by residues glutamine 70, 92–94, and threonine 114; that span reads EGR. Residue aspartate 126 is the Proton acceptor of the active site. Arginine 128 (nucleophile) is an active-site residue. GTP is bound by residues threonine 149 and lysine 154.

This sequence belongs to the GTP cyclohydrolase II family. Homodimer. Requires Zn(2+) as cofactor.

It carries out the reaction GTP + 4 H2O = 2,5-diamino-6-hydroxy-4-(5-phosphoribosylamino)-pyrimidine + formate + 2 phosphate + 3 H(+). It participates in cofactor biosynthesis; riboflavin biosynthesis; 5-amino-6-(D-ribitylamino)uracil from GTP: step 1/4. Catalyzes the conversion of GTP to 2,5-diamino-6-ribosylamino-4(3H)-pyrimidinone 5'-phosphate (DARP), formate and pyrophosphate. In Klebsiella pneumoniae subsp. pneumoniae (strain ATCC 700721 / MGH 78578), this protein is GTP cyclohydrolase-2.